Reading from the N-terminus, the 447-residue chain is Probable glycine dehydrogenase (decarboxylating) subunit 1 (447 aa).

The protein belongs to the GcvP family. N-terminal subunit subfamily. In terms of assembly, the glycine cleavage system is composed of four proteins: P, T, L and H. In this organism, the P 'protein' is a heterodimer of two subunits.

The catalysed reaction is N(6)-[(R)-lipoyl]-L-lysyl-[glycine-cleavage complex H protein] + glycine + H(+) = N(6)-[(R)-S(8)-aminomethyldihydrolipoyl]-L-lysyl-[glycine-cleavage complex H protein] + CO2. In terms of biological role, the glycine cleavage system catalyzes the degradation of glycine. The P protein binds the alpha-amino group of glycine through its pyridoxal phosphate cofactor; CO(2) is released and the remaining methylamine moiety is then transferred to the lipoamide cofactor of the H protein. This Bacillus cereus (strain G9842) protein is Probable glycine dehydrogenase (decarboxylating) subunit 1.